Reading from the N-terminus, the 656-residue chain is Squalene-hopene cyclase (656 aa).

Residues 68 to 110 (EQKIANYLRRCQSREHWGWPVYYGGEFNISASVQAYFALKMTG) form a PFTB 1 repeat. The active-site Proton donor is Asp396. PFTB repeat units follow at residues 417–459 (LDRA…ALLD), 485–525 (IERG…NASG), 533–582 (VLKC…GLMA), and 591–634 (VKRG…QFFP).

It belongs to the terpene cyclase/mutase family.

The catalysed reaction is squalene = hop-22(29)-ene. The enzyme catalyses squalene + H2O = hopan-22-ol. Its function is as follows. Squalene cyclase that catalyzes the oxygen-independent cyclization of squalene into hopanoids, a class of cyclic triterpenoids including hop-22(29)-ene, hop-17(21)-ene, hop-21(22)-ene, and hopan-22-ol. This chain is Squalene-hopene cyclase, found in Schizosaccharomyces japonicus (strain yFS275 / FY16936) (Fission yeast).